A 318-amino-acid polypeptide reads, in one-letter code: UAP56-interacting factor (318 aa).

Residue methionine 1 is modified to N-acetylmethionine. Residues 1-27 are disordered; sequence MNRFSTRLMGATATPPPAPPKARSNEN. Phosphothreonine is present on threonine 14. Serine 24 bears the Phosphoserine mark. Residues 27–45 carry the UAP56-binding motif motif; sequence NLDKIDMSLDDIIKLNRKE. Phosphoserine is present on residues serine 61 and serine 118. A Glycyl lysine isopeptide (Lys-Gly) (interchain with G-Cter in SUMO1) cross-link involves residue lysine 140. Positions 163–180 are enriched in polar residues; sequence LNRKNNIPNNFTRSGNKL. Residues 163 to 183 are disordered; sequence LNRKNNIPNNFTRSGNKLSHQ. Lysine 261 is covalently cross-linked (Glycyl lysine isopeptide (Lys-Gly) (interchain with G-Cter in SUMO2)).

It belongs to the UIF family. Interacts with DDX39B/UAP56 and NXF1; interaction with DDX39B/UAP56 and NXF1 are mutually exclusive. Interacts with SSRP1; required for its recruitment to mRNAs. Interacts with CHTOP.

The protein resides in the nucleus. Its subcellular location is the nucleoplasm. It localises to the nucleus speckle. Functionally, required for mRNA export from the nucleus to the cytoplasm. Acts as an adapter that uses the DDX39B/UAP56-NFX1 pathway to ensure efficient mRNA export and delivering to the nuclear pore. Associates with spliced and unspliced mRNAs simultaneously with ALYREF/THOC4. This Bos taurus (Bovine) protein is UAP56-interacting factor (FYTTD1).